A 373-amino-acid polypeptide reads, in one-letter code: Putative glutamate--cysteine ligase 2 (373 aa).

It belongs to the glutamate--cysteine ligase type 2 family. YbdK subfamily. Homodimer.

The catalysed reaction is L-cysteine + L-glutamate + ATP = gamma-L-glutamyl-L-cysteine + ADP + phosphate + H(+). Functionally, ATP-dependent carboxylate-amine ligase which exhibits weak glutamate--cysteine ligase activity. The sequence is that of Putative glutamate--cysteine ligase 2 from Enterobacter sp. (strain 638).